The primary structure comprises 262 residues: 3-methyl-2-oxobutanoate hydroxymethyltransferase (262 aa).

Residues Asp-42 and Asp-81 each contribute to the Mg(2+) site. 3-methyl-2-oxobutanoate contacts are provided by residues 42–43 (DS), Asp-81, and Lys-110. Residue Glu-112 coordinates Mg(2+). Residue Glu-180 is the Proton acceptor of the active site.

It belongs to the PanB family. In terms of assembly, homodecamer; pentamer of dimers. The cofactor is Mg(2+).

The protein localises to the cytoplasm. The catalysed reaction is 3-methyl-2-oxobutanoate + (6R)-5,10-methylene-5,6,7,8-tetrahydrofolate + H2O = 2-dehydropantoate + (6S)-5,6,7,8-tetrahydrofolate. It functions in the pathway cofactor biosynthesis; (R)-pantothenate biosynthesis; (R)-pantoate from 3-methyl-2-oxobutanoate: step 1/2. Catalyzes the reversible reaction in which hydroxymethyl group from 5,10-methylenetetrahydrofolate is transferred onto alpha-ketoisovalerate to form ketopantoate. This is 3-methyl-2-oxobutanoate hydroxymethyltransferase from Legionella pneumophila (strain Paris).